A 128-amino-acid polypeptide reads, in one-letter code: MALTQDELLAEFEGMTLIQLSEFVKAFEEKFDVTAAAAAPVVVAGGAAGGAAAEAEEEKDEFDVILTGAGDKKIQVIKVVRELTSLGLKEAKDLVDGTPKPVLEKVNKEAADKAAEALKGAGASVEVK.

It belongs to the bacterial ribosomal protein bL12 family. As to quaternary structure, homodimer. Part of the ribosomal stalk of the 50S ribosomal subunit. Forms a multimeric L10(L12)X complex, where L10 forms an elongated spine to which 2 to 4 L12 dimers bind in a sequential fashion. Binds GTP-bound translation factors.

Functionally, forms part of the ribosomal stalk which helps the ribosome interact with GTP-bound translation factors. Is thus essential for accurate translation. The polypeptide is Large ribosomal subunit protein bL12 (Streptomyces antibioticus).